The sequence spans 292 residues: Elongation factor Ts (292 aa).

Residues 80–83 (TDFV) are involved in Mg(2+) ion dislocation from EF-Tu.

It belongs to the EF-Ts family.

It is found in the cytoplasm. Associates with the EF-Tu.GDP complex and induces the exchange of GDP to GTP. It remains bound to the aminoacyl-tRNA.EF-Tu.GTP complex up to the GTP hydrolysis stage on the ribosome. This Cupriavidus taiwanensis (strain DSM 17343 / BCRC 17206 / CCUG 44338 / CIP 107171 / LMG 19424 / R1) (Ralstonia taiwanensis (strain LMG 19424)) protein is Elongation factor Ts.